Consider the following 1030-residue polypeptide: Alpha-L-rhamnosidase (1030 aa).

Residues 133–297 are carbohydrate-binding module-67 (CBM67); the sequence is PSLEGSSWIW…GAGPWGRVAP (165 aa). Asp-179 and Asn-180 together coordinate Ca(2+). Alpha-L-rhamnose contacts are provided by residues 179–180 and Trp-203; that span reads DN. Asn-228 and Pro-233 together coordinate Ca(2+). Residues Asp-630, 634–636, Asp-643, and Trp-695 contribute to the alpha-L-rhamnose site; that span reads RDE. Glu-636 serves as the catalytic Proton donor. Residue Glu-895 is the Proton acceptor of the active site. His-916 serves as a coordination point for alpha-L-rhamnose.

It belongs to the glycosyl hydrolase 78 family.

The catalysed reaction is Hydrolysis of terminal non-reducing alpha-L-rhamnose residues in alpha-L-rhamnosides.. Functionally, alpha-L-rhamnosidase which is able to degrade p-nitrophenyl-alpha-L-rhamnopyranoside (PNP-Rha) in vitro. Releases L-rhamnose from citrus flavonoids such as naringin, rutin and hesperidin, and the arabinogalactan-protein (AGP) gum arabic. AGPs are a family of proteoglycans that are localized on the cell surfaces of higher plants. Cleaves both the alpha-1,6 and the alpha-1,2-linked rhamnosyl residues. This Streptomyces avermitilis (strain ATCC 31267 / DSM 46492 / JCM 5070 / NBRC 14893 / NCIMB 12804 / NRRL 8165 / MA-4680) protein is Alpha-L-rhamnosidase.